Here is a 649-residue protein sequence, read N- to C-terminus: Endoplasmic reticulum chaperone BiP (649 aa).

The N-terminal stretch at 1–20 is a signal peptide; that stretch reads MGLSTYVGTFLLCILTLSHC. Residues 36 to 39, K96, 226 to 228, 292 to 299, and 363 to 366 contribute to the ATP site; these read GTTY, GGT, EKAKRTLS, and GSTR. The tract at residues 125-279 is nucleotide-binding (NBD); that stretch reads KPYMKVQVGS…KKKEGKDITK (155 aa). The segment at 399–499 is substrate-binding (SBD); the sequence is VQAGVISGVE…PRGLPQIEVT (101 aa). The Prevents secretion from ER signature appears at 646–649; that stretch reads KEEL.

It belongs to the heat shock protein 70 family.

It is found in the endoplasmic reticulum lumen. The enzyme catalyses ATP + H2O = ADP + phosphate + H(+). Its activity is regulated as follows. The chaperone activity is regulated by ATP-induced allosteric coupling of the nucleotide-binding (NBD) and substrate-binding (SBD) domains. In the ADP-bound and nucleotide-free (apo) states, the two domains have little interaction. In contrast, in the ATP-bound state the two domains are tightly coupled, which results in drastically accelerated kinetics in both binding and release of polypeptide substrates. J domain-containing co-chaperones stimulate the ATPase activity and are required for efficient substrate recognition. In terms of biological role, endoplasmic reticulum chaperone that plays a key role in protein folding and quality control in the endoplasmic reticulum lumen. Involved in the correct folding of proteins and degradation of misfolded proteins. Acts as a key repressor of the unfolded protein response (UPR). In Echinococcus multilocularis (Fox tapeworm), this protein is Endoplasmic reticulum chaperone BiP.